Here is a 231-residue protein sequence, read N- to C-terminus: Orotidine 5'-phosphate decarboxylase (231 aa).

Residues D11, K33, 60–69 (DLKFHDIPNT), T120, R181, Q190, G210, and R211 each bind substrate. K62 serves as the catalytic Proton donor.

The protein belongs to the OMP decarboxylase family. Type 1 subfamily. In terms of assembly, homodimer.

The enzyme catalyses orotidine 5'-phosphate + H(+) = UMP + CO2. It participates in pyrimidine metabolism; UMP biosynthesis via de novo pathway; UMP from orotate: step 2/2. Its function is as follows. Catalyzes the decarboxylation of orotidine 5'-monophosphate (OMP) to uridine 5'-monophosphate (UMP). This Shewanella oneidensis (strain ATCC 700550 / JCM 31522 / CIP 106686 / LMG 19005 / NCIMB 14063 / MR-1) protein is Orotidine 5'-phosphate decarboxylase.